Consider the following 188-residue polypeptide: Adenine phosphoribosyltransferase (188 aa).

It belongs to the purine/pyrimidine phosphoribosyltransferase family. In terms of assembly, homodimer.

The protein resides in the cytoplasm. It catalyses the reaction AMP + diphosphate = 5-phospho-alpha-D-ribose 1-diphosphate + adenine. It functions in the pathway purine metabolism; AMP biosynthesis via salvage pathway; AMP from adenine: step 1/1. Its function is as follows. Catalyzes a salvage reaction resulting in the formation of AMP, that is energically less costly than de novo synthesis. The sequence is that of Adenine phosphoribosyltransferase from Neisseria meningitidis serogroup B (strain ATCC BAA-335 / MC58).